A 105-amino-acid polypeptide reads, in one-letter code: Small ribosomal subunit protein uS10 (105 aa).

Belongs to the universal ribosomal protein uS10 family. In terms of assembly, part of the 30S ribosomal subunit.

Its function is as follows. Involved in the binding of tRNA to the ribosomes. This is Small ribosomal subunit protein uS10 from Oleidesulfovibrio alaskensis (strain ATCC BAA-1058 / DSM 17464 / G20) (Desulfovibrio alaskensis).